We begin with the raw amino-acid sequence, 188 residues long: FUN14 domain-containing protein 1B (188 aa).

The helical transmembrane segment at 21 to 41 (VVNIDGNIFSIYVCFFVCFFF) threads the bilayer. Positions 52–55 (YEVL) match the YXXL motif. Transmembrane regions (helical) follow at residues 82 to 102 (YSVA…GFLF), 109 to 129 (AATA…GGYI), and 167 to 187 (FFKK…IGLA).

Belongs to the FUN14 family.

The protein resides in the mitochondrion outer membrane. Acts as an activator of hypoxia-induced mitophagy, an important mechanism for mitochondrial quality control. This chain is FUN14 domain-containing protein 1B (fundc1-b), found in Xenopus laevis (African clawed frog).